We begin with the raw amino-acid sequence, 3051 residues long: MATNPQPQPPPPAPPPPPPQPQPQPPPPPPGPGAGPGAGGAGGAGAGAGDPQLVAMIVNHLKSQGLFDQFRRDCLADVDTKPAYQNLRQRVDNFVANHLATHTWSPHLNKNQLRNNIRQQVLKSGMLESGIDRIISQVVDPKINHTFRPQVEKAVHEFLATLNHKEEGSGNTAPDDEKPDTSLITQGVPTPGPSANVANDAMSILETITSLNQEASAARASTETSNAKTSERASKKLPSQPTTDTSTDKERTSEDMADKEKSTADSGGEGLETAPKSEEFSDLPCPVEEIKNYTKEHNNLILLNKDVQQESSEQKNKSTDKGEKKPDSNEKGERKKEKKEKTEKKFDHSKKSEDTQKVKDEKQAKEKEVESLKLPSEKNSNKAKTVEGTKEDFSLIDSDVDGLTDITVSSVHTSDLSSFEEDTEEEVVTSDSMEEGEITSDDEEKNKQNKTKTQTSDSSEGKTKSVRHAYVHKPYLYSKYYSDSDDELTVEQRRQSIAKEKEERLLRRQINREKLEEKRKQKAEKTKSSKTKGQGRSSVDLEESSTKSLEPKAARIKEVLKERKVLEKKVALSKKRKKDSRNVEENSKKKQQYEEDSKETLKTSEHCEKEKISSSKELKHVHAKSEPSKPARRLSESLHVVDENKNESKLEREHKRRTSTPVIMEGVQEETDTRDVKRQVERSEICTEEPQKQKSTLKNEKHLKKDDSETPHLKSLLKKEVKSSKEKPEREKTPSEDKLSVKHKYKGDCMHKTGDETELHSSEKGLKVEENIQKQSQQTKLSSDDKTERKSKHRNERKLSVLGKDGKPVSEYIIKTDENVRKENNKKERRLSAEKTKAEHKSRRSSDSKIQKDSLGSKQHGITLQRRSESYSEDKCDMDSTNMDSNLKPEEVVHKEKRRTKSLLEEKLVLKSKSKTQGKQVKVVETELQEGATKQATTPKPDKEKNTEENDSEKQRKSKVEDKPFEETGVEPVLETASSSAHSTQKDSSHRAKLPLAKEKYKSDKDSTSTRLERKLSDGHKSRSLKHSSKDIKKKDENKSDDKDGKEVDSSHEKARGNSSLMEKKLSRRLCENRRGSLSQEMAKGEEKLAANTLSTPSGSSLQRPKKSGDMTLIPEQEPMEIDSEPGVENVFEVSKTQDNRNNNSQQDIDSENMKQKTSATVQKDELRTCTADSKATAPAYKPGRGTGVNSNSEKHADHRSTLTKKMHIQSAVSKMNPGEKEPIHRGTTEVNIDSETVHRMLLSAPSENDRVQKNLKNTAAEEHVAQGDATLEHSTNLDSSPSLSSVTVVPLRESYDPDVIPLFDKRTVLEGSTASTSPADHSALPNQSLTVRESEVLKTSDSKEGGEGFTVDTPAKASITSKRHIPEAHQATLLDGKQGKVIMPLGSKLTGVIVENENITKEGGLVDMAKKENDLNAEPNLKQTIKATVENGKKDGIAVDHVVGLNTEKYAETVKLKHKRSPGKVKDISIDVERRNENSEVDTSAGSGSAPSVLHQRNGQTEDVATGPRRAEKTSVATSTEGKDKDVTLSPVKAGPATTTSSETRQSEVALPCTSIEADEGLIIGTHSRNNPLHVGAEASECTVFAAAEEGGAVVTEGFAESETFLTSTKEGESGECAVAESEDRAADLLAVHAVKIEANVNSVVTEEKDDAVTSAGSEEKCDGSLSRDSEIVEGTITFISEVESDGAVTSAGTEIRAGSISSEEVDGSQGNMMRMGPKKETEGTVTCTGAEGRSDNFVICSVTGAGPREERMVTGAGVVLGDNDAPPGTSASQEGDGSVNDGTEGESAVTSTGITEDGEGPASCTGSEDSSEGFAISSESEENGESAMDSTVAKEGTNVPLVAAGPCDDEGIVTSTGAKEEDEEGEDVVTSTGRGNEIGHASTCTGLGEESEGVLICESAEGDSQIGTVVEHVEAEAGAAIMNANENNVDSMSGTEKGSKDTDICSSAKGIVESSVTSAVSGKDEVTPVPGGCEGPMTSAASDQSDSQLEKVEDTTISTGLVGGSYDVLVSGEVPECEVAHTSPSEKEDEDIITSVENEECDGLMATTASGDITNQNSLAGGKNQGKVLIISTSTTNDYTPQVSAITDVEGGLSDALRTEENMEGTRVTTEEFEAPMPSAVSGDDSQLTASRSEEKDECAMISTSIGEEFELPISSATTIKCAESLQPVAAAVEERATGPVLISTADFEGPMPSAPPEAESPLASTSKEEKDECALISTSIAEECEASVSGVVVESENERAGTVMEEKDGSGIISTSSVEDCEGPVSSAVPQEEGDPSVTPAEEMGDTAMISTSTSEGCEAVMIGAVLQDEDRLTITRVEDLSDAAIISTSTAECMPISASIDRHEENQLTADNPEGNGDLSATEVSKHKVPMPSLIAENNCRCPGPVRGGKEPGPVLAVSTEEGHNGPSVHKPSAGQGHPSAVCAEKEEKHGKECPEIGPFAGRGQKESTLHLINAEEKNVLLNSLQKEDKSPETGTAGGSSTASYSAGRGLEGNANSPAHLRGPEQTSGQTAKDPSVSIRYLAAVNTGAIKADDMPPVQGTVAEHSFLPAEQQGSEDNLKTSTTKCITGQESKIAPSHTMIPPATYSVALLAPKCEQDLTIKNDYSGKWTDQASAEKTGDDNSTRKSFPEEGDIMVTVSSEENVCDIGNEESPLNVLGGLKLKANLKMEAYVPSEEEKNGEILAPPESLCGGKPSGIAELQREPLLVNESLNVENSGFRTNEEIHSESYNKGEISSGRKDNAEAISGHSVEADPKEVEEEERHMPKRKRKQHYLSSEDEPDDNPDVLDSRIETAQRQCPETEPHDTKEENSRDLEELPKTSSETNSTTSRVMEEKDEYSSSETTGEKPEQNDDDTIKSQEEDQPIIIKRKRGRPRKYPVETTLKMKDDSKTDTGIVTVEQSPSSSKLKVMQTDESNKETANLQERSISNDDGEEKIVTSVRRRGRKPKRSLTVSDDAESSEPERKRQKSVSDPVEDKKEQESDEEEEEEEEDEPSGATTRSTTRSEAQRSKTQLSPSIKRKREVSPPGARTRGQQRVEEAPVKKAKR.

The segment covering 1–33 (MATNPQPQPPPPAPPPPPPQPQPQPPPPPPGPG) has biased composition (pro residues). Disordered regions lie at residues 1 to 47 (MATN…AGAG), 164 to 197 (HKEE…SANV), 215 to 288 (ASAA…CPVE), 301 to 393 (ILLN…KEDF), and 411 to 469 (VHTS…VRHA). Over residues 34–47 (AGPGAGGAGGAGAG) the composition is skewed to gly residues. Low complexity predominate over residues 215-227 (ASAARASTETSNA). The span at 246–263 (STDKERTSEDMADKEKST) shows a compositional bias: basic and acidic residues. Serine 266 bears the Phosphoserine mark. The segment covering 312-393 (SEQKNKSTDK…KTVEGTKEDF (82 aa)) has biased composition (basic and acidic residues). The segment covering 418-443 (SFEEDTEEEVVTSDSMEEGEITSDDE) has biased composition (acidic residues). Lysine 473 bears the N6-acetyllysine mark. 2 positions are modified to phosphoserine: serine 482 and serine 484. 3 stretches are compositionally biased toward basic and acidic residues: residues 497 to 527 (IAKE…EKTK), 549 to 570 (LEPK…EKKV), and 580 to 653 (SRNV…LERE). A disordered region spans residues 497 to 1203 (IAKEKEERLL…EKHADHRSTL (707 aa)). Phosphoserine is present on residues serine 635 and serine 659. Threonine 660 and threonine 733 each carry phosphothreonine. Composition is skewed to basic and acidic residues over residues 671–772 (TDTR…EENI), 804–852 (KDGK…KIQK), 866–878 (RRSE…KCDM), 940–966 (KPDK…KPFE), 984–1021 (TQKD…DGHK), and 1028–1075 (SSKD…ENRR). Serine 1077 carries the phosphoserine modification. Composition is skewed to polar residues over residues 1092 to 1103 (NTLSTPSGSSLQ) and 1135 to 1148 (SKTQ…SQQD). Phosphoserine occurs at positions 1145 and 1318. Threonine 1354 is subject to Phosphothreonine. Disordered stretches follow at residues 1456–1550 (KLKH…QSEV), 1700–1725 (GSIS…ETEG), and 1760–1890 (VVLG…TGLG). The span at 1465-1479 (KVKDISIDVERRNEN) shows a compositional bias: basic and acidic residues. The segment covering 1482–1504 (VDTSAGSGSAPSVLHQRNGQTED) has biased composition (polar residues). Serine 1531, serine 1701, and serine 1710 each carry phosphoserine. Phosphoserine is present on residues serine 2013, serine 2025, serine 2128, and serine 2203. Disordered regions lie at residues 2189–2210 (DFEG…STSK), 2258–2285 (TSSV…TPAE), 2403–2447 (STEE…FAGR), 2472–2519 (EDKS…AKDP), 2615–2635 (DQAS…FPEE), and 2717–3051 (VENS…KAKR). A compositionally biased stretch (low complexity) spans 2191–2207 (EGPMPSAPPEAESPLAS). Positions 2428–2439 (AEKEEKHGKECP) are enriched in basic and acidic residues. Serine 2475 carries the post-translational modification Phosphoserine. Over residues 2483-2492 (GSSTASYSAG) the composition is skewed to low complexity. 2 positions are modified to phosphoserine: serine 2501 and serine 2618. Composition is skewed to basic and acidic residues over residues 2621–2633 (KTGD…KSFP), 2724–2746 (TNEE…KDNA), and 2754–2767 (VEAD…EERH). Acidic residues predominate over residues 2780-2789 (SEDEPDDNPD). Residues 2791 to 2822 (LDSRIETAQRQCPETEPHDTKEENSRDLEELP) are compositionally biased toward basic and acidic residues. Residues 2823 to 2834 (KTSSETNSTTSR) are compositionally biased toward polar residues. The span at 2848–2864 (TGEKPEQNDDDTIKSQE) shows a compositional bias: basic and acidic residues. A compositionally biased stretch (basic residues) spans 2871-2880 (IKRKRGRPRK). Positions 2872-2884 (KRKRGRPRKYPVE) form a DNA-binding region, a.T hook. The segment covering 2896–2910 (DTGIVTVEQSPSSSK) has biased composition (polar residues). Residues serine 2905 and serine 2907 each carry the phosphoserine modification. A compositionally biased stretch (basic residues) spans 2944-2953 (VRRRGRKPKR). Residue serine 2954 is modified to Phosphoserine. Threonine 2956 bears the Phosphothreonine mark. Phosphoserine occurs at positions 2958, 2964, and 2973. Residues lysine 2981 and lysine 2982 each participate in a glycyl lysine isopeptide (Lys-Gly) (interchain with G-Cter in ubiquitin) cross-link. The segment covering 2985-2998 (ESDEEEEEEEEDEP) has biased composition (acidic residues). A phosphoserine mark is found at serine 2986 and serine 3019. Over residues 3000-3020 (GATTRSTTRSEAQRSKTQLSP) the composition is skewed to polar residues. Positions 3039–3051 (QRVEEAPVKKAKR) are enriched in basic and acidic residues.

This sequence belongs to the BOD1 family. Interacts (via COMPASS-Shg1 domain) with SETD1A at stalled replication forks; this interaction mediates FANCD2-dependent nucleosome remodeling at reversed forks protecting them from nucleolytic degradation.

It localises to the chromosome. Component of the fork protection machinery required to protect stalled/damaged replication forks from uncontrolled DNA2-dependent resection. Acts by stabilizing RAD51 at stalled replication forks and protecting RAD51 nucleofilaments from the antirecombinogenic activities of FBH1 and BLM. Does not regulate spindle orientation. The sequence is that of Biorientation of chromosomes in cell division protein 1-like 1 from Homo sapiens (Human).